We begin with the raw amino-acid sequence, 82 residues long: Sec-independent protein translocase protein TatA (82 aa).

Residues 2 to 22 (GFGGISLWQLLIVLAIIVLLF) form a helical membrane-spanning segment. The segment at 43–82 (KAMSDEKNTDKEKPEQIQKSEESAPLDSAHTEKNKDNNKV) is disordered. 2 stretches are compositionally biased toward basic and acidic residues: residues 44 to 64 (AMSDEKNTDKEKPEQIQKSEE) and 71 to 82 (AHTEKNKDNNKV).

It belongs to the TatA/E family. The Tat system comprises two distinct complexes: a TatABC complex, containing multiple copies of TatA, TatB and TatC subunits, and a separate TatA complex, containing only TatA subunits. Substrates initially bind to the TatABC complex, which probably triggers association of the separate TatA complex to form the active translocon.

The protein localises to the cell inner membrane. Its function is as follows. Part of the twin-arginine translocation (Tat) system that transports large folded proteins containing a characteristic twin-arginine motif in their signal peptide across membranes. TatA could form the protein-conducting channel of the Tat system. The protein is Sec-independent protein translocase protein TatA of Pseudoalteromonas translucida (strain TAC 125).